An 835-amino-acid chain; its full sequence is MYSFFNTLTVTKIISRLILSIGLIFGIFTYGFSQQHYFNSEALENPAEHNEAFNKIISTGTSLAVSGNASNITRSMVNDAANQEVKHWLNRFGTTQVNVNFDKKFSLKESSLDWLLPWYDSASYVFFSQLGIRNKDSRNTLNIGAGVRTFQQSWMYGFNTSYDNDMTGHNHRIGVGAEAWTDYLQLSANGYFRLNGWHQSRDFADYNERPASGGDIHVKAYLPALPQLGGKLKYEQYRGERVALFGKDNLQSNPYAVTTGLIYTPIPFITLGVDQRMGKSRQHEIQWNLQMDYRLGESFRSQFSPAVVAGTRLLAESRYNLVERNPNIVLEYQKQNTIKLAFSPAVLSGLPGQVYSVSAQIQSQSALQRILWNDAQWVAAGGKLIPVSATDYNVVLPPYKPMAPASRTVGKTGESEAAVNTYTLSATAIDNHGNSSNPATLTVIVQQPQFVITSEVTDDGALADGRTPITVKFTVTNIDSTPVAEQEGVITTSNGALPSKVTKKTDAQGVISIALTSFTVGVSVVTLDIQGQQATVDVRFAVLPPDVTNSSFNVSPSDIVADGSMQSILTFVPRNKNNEFVSGITDLEFIQSGVPVTISPVTENADNYTASVVGNSVGDVDITPQVGGESLDLLQKRITLYPVPKITGINVNGEQFATDKGFPKTTFNKATFQLVMNDDVANNTQYDWTSSYAASAPVDNQGKVNIAYKTYGSTVTVTAKSKKFPSYTATYQFKPNLWVFSGTMSLQSSVEASRNCQRTDFTALIESARASNGSRSPDGTLWGEWGSLATYDSAEWPSGNYWTKKTSTDFVTMDMTTGDIPTSAATAYPLCAEPQ.

The region spanning 451–541 (VITSEVTDDG…QQATVDVRFA (91 aa)) is the Big-1 domain.

The protein belongs to the intimin/invasin family.

The protein resides in the cell outer membrane. Invasin is a protein that allows enteric bacteria to penetrate cultured mammalian cells. The entry of invasin in the cell is mediated by binding several beta-1 chain integrins. The protein is Invasin of Yersinia enterocolitica.